A 545-amino-acid chain; its full sequence is Thermosome subunit beta (545 aa).

Belongs to the TCP-1 chaperonin family. In terms of assembly, forms a Heterooligomeric complex of two stacked eight-membered rings.

In terms of biological role, molecular chaperone; binds unfolded polypeptides in vitro, and has a weak ATPase activity. This Thermococcus sp. (strain KS-8) protein is Thermosome subunit beta (thsB).